The sequence spans 473 residues: ATP synthase subunit beta (473 aa).

153-160 (GGAGVGKT) is a binding site for ATP.

It belongs to the ATPase alpha/beta chains family. F-type ATPases have 2 components, CF(1) - the catalytic core - and CF(0) - the membrane proton channel. CF(1) has five subunits: alpha(3), beta(3), gamma(1), delta(1), epsilon(1). CF(0) has three main subunits: a(1), b(2) and c(9-12). The alpha and beta chains form an alternating ring which encloses part of the gamma chain. CF(1) is attached to CF(0) by a central stalk formed by the gamma and epsilon chains, while a peripheral stalk is formed by the delta and b chains.

It localises to the cell inner membrane. It carries out the reaction ATP + H2O + 4 H(+)(in) = ADP + phosphate + 5 H(+)(out). Produces ATP from ADP in the presence of a proton gradient across the membrane. The catalytic sites are hosted primarily by the beta subunits. This is ATP synthase subunit beta from Rickettsia bellii (strain OSU 85-389).